Here is a 357-residue protein sequence, read N- to C-terminus: N-acetyl-gamma-glutamyl-phosphate reductase (357 aa).

Cysteine 151 is an active-site residue.

The protein belongs to the NAGSA dehydrogenase family. Type 1 subfamily.

It is found in the cytoplasm. The catalysed reaction is N-acetyl-L-glutamate 5-semialdehyde + phosphate + NADP(+) = N-acetyl-L-glutamyl 5-phosphate + NADPH + H(+). The protein operates within amino-acid biosynthesis; L-arginine biosynthesis; N(2)-acetyl-L-ornithine from L-glutamate: step 3/4. In terms of biological role, catalyzes the NADPH-dependent reduction of N-acetyl-5-glutamyl phosphate to yield N-acetyl-L-glutamate 5-semialdehyde. This Corynebacterium kroppenstedtii (strain DSM 44385 / JCM 11950 / CIP 105744 / CCUG 35717) protein is N-acetyl-gamma-glutamyl-phosphate reductase.